The sequence spans 87 residues: Toxin ICK-41 (87 aa).

A signal peptide spans 1–19 (MKPIVYMLLFCAFTVVILG). 4 cysteine pairs are disulfide-bonded: Cys-40-Cys-54, Cys-40-Cys-77, Cys-53-Cys-66, and Cys-80-Cys-87.

This sequence belongs to the neurotoxin 27 (Jztx-72) family. ICK-41 subfamily. In terms of tissue distribution, expressed by the venom gland.

It localises to the secreted. In terms of biological role, probable neurotoxin with ion channel impairing activity. The sequence is that of Toxin ICK-41 from Trittame loki (Brush-footed trapdoor spider).